The chain runs to 341 residues: Ribosomal RNA small subunit methyltransferase H (341 aa).

S-adenosyl-L-methionine contacts are provided by residues 47–49 (GGY), Asp-64, Phe-91, Asp-109, and Gln-116.

This sequence belongs to the methyltransferase superfamily. RsmH family.

The protein resides in the cytoplasm. It catalyses the reaction cytidine(1402) in 16S rRNA + S-adenosyl-L-methionine = N(4)-methylcytidine(1402) in 16S rRNA + S-adenosyl-L-homocysteine + H(+). Specifically methylates the N4 position of cytidine in position 1402 (C1402) of 16S rRNA. This chain is Ribosomal RNA small subunit methyltransferase H, found in Rhizobium leguminosarum bv. trifolii (strain WSM1325).